We begin with the raw amino-acid sequence, 367 residues long: Flagellar P-ring protein (367 aa).

An N-terminal signal peptide occupies residues 1 to 21 (MYVFKALAGIVLALVATLAHA).

It belongs to the FlgI family. The basal body constitutes a major portion of the flagellar organelle and consists of four rings (L,P,S, and M) mounted on a central rod.

The protein localises to the periplasm. It localises to the bacterial flagellum basal body. Functionally, assembles around the rod to form the L-ring and probably protects the motor/basal body from shearing forces during rotation. In Salmonella paratyphi C (strain RKS4594), this protein is Flagellar P-ring protein.